We begin with the raw amino-acid sequence, 199 residues long: MAAQDNSDIEALIALMAKLPGLGPRSARRAVLHLIRKRALVLTPLADAMSRVAETARECLNCGNVGTSDICALCEDETRANGELCVVEDVADLWAMERAGVFKGRYHVLGGTLSALDAIGPEDLRIPRLVDRVSTEGVSEVILALNATIDGQTTAHYIADQLSGRVKLTSLAQGVPIGGELDYLDDGTISAALRARKEI.

Residues 59-74 (CLNCGNVGTSDICALC) form a C4-type zinc finger. In terms of domain architecture, Toprim spans 82–176 (GELCVVEDVA…KLTSLAQGVP (95 aa)).

This sequence belongs to the RecR family.

Its function is as follows. May play a role in DNA repair. It seems to be involved in an RecBC-independent recombinational process of DNA repair. It may act with RecF and RecO. The protein is Recombination protein RecR of Ruegeria sp. (strain TM1040) (Silicibacter sp.).